Consider the following 675-residue polypeptide: Pesticidal crystal protein Cry25Aa (675 aa).

The protein belongs to the delta endotoxin family.

Promotes colloidosmotic lysis by binding to the midgut epithelial cells of insects. This Bacillus thuringiensis subsp. jegathesan protein is Pesticidal crystal protein Cry25Aa (cry25Aa).